The chain runs to 1028 residues: Ubiquitin conjugation factor E4 A (1028 aa).

The tract at residues 33–57 (KEQLKQQSDELPASPDDSDNSVSES) is disordered. The residue at position 386 (K386) is an N6-acetyllysine. The U-box domain occupies 949–1023 (DACDEFLDPI…QRWLAERKQQ (75 aa)).

This sequence belongs to the ubiquitin conjugation factor E4 family. Expressed in liver, heart, brain, kidney and testis.

It localises to the cytoplasm. It catalyses the reaction S-ubiquitinyl-[E2 ubiquitin-conjugating enzyme]-L-cysteine + [acceptor protein]-L-lysine = [E2 ubiquitin-conjugating enzyme]-L-cysteine + N(6)-ubiquitinyl-[acceptor protein]-L-lysine.. Its pathway is protein modification; protein ubiquitination. In terms of biological role, ubiquitin-protein ligase that probably functions as an E3 ligase in conjunction with specific E1 and E2 ligases. May also function as an E4 ligase mediating the assembly of polyubiquitin chains on substrates ubiquitinated by another E3 ubiquitin ligase. Mediates 'Lys-48'-linked polyubiquitination of substrates. The protein is Ubiquitin conjugation factor E4 A of Mus musculus (Mouse).